A 424-amino-acid polypeptide reads, in one-letter code: Adenosylmethionine-8-amino-7-oxononanoate aminotransferase (424 aa).

A substrate-binding site is contributed by W46. Residue 106-107 (GS) participates in pyridoxal 5'-phosphate binding. Position 138 (Y138) interacts with substrate. D240 contacts pyridoxal 5'-phosphate. Positions 269 and 303 each coordinate substrate. Position 269 is an N6-(pyridoxal phosphate)lysine (K269). A pyridoxal 5'-phosphate-binding site is contributed by 304–305 (HS). R391 contributes to the substrate binding site.

It belongs to the class-III pyridoxal-phosphate-dependent aminotransferase family. BioA subfamily. Homodimer. Requires pyridoxal 5'-phosphate as cofactor.

It is found in the cytoplasm. It catalyses the reaction (8S)-8-amino-7-oxononanoate + S-adenosyl-L-methionine = S-adenosyl-4-methylsulfanyl-2-oxobutanoate + (7R,8S)-7,8-diammoniononanoate. Its pathway is cofactor biosynthesis; biotin biosynthesis; 7,8-diaminononanoate from 8-amino-7-oxononanoate (SAM route): step 1/1. Catalyzes the transfer of the alpha-amino group from S-adenosyl-L-methionine (SAM) to 7-keto-8-aminopelargonic acid (KAPA) to form 7,8-diaminopelargonic acid (DAPA). It is the only aminotransferase known to utilize SAM as an amino donor. Complements a bioU deletion in Synechocystis PCC 6803. The protein is Adenosylmethionine-8-amino-7-oxononanoate aminotransferase of Synechococcus elongatus (strain ATCC 33912 / PCC 7942 / FACHB-805) (Anacystis nidulans R2).